We begin with the raw amino-acid sequence, 601 residues long: Trehalose synthase/amylase TreS (601 aa).

The tract at residues 1-21 (MNEAEHSVEHPPVQGSHVEGG) is disordered. Asp-98 contributes to the substrate binding site. Asn-140 contacts Ca(2+). Residues His-141 and Gln-206 each coordinate substrate. Residue Asp-208 participates in Ca(2+) binding. Arg-236 contributes to the substrate binding site. The Nucleophile role is filled by Asp-238. Ca(2+) contacts are provided by Tyr-242, Leu-243, and Glu-245. Glu-280 serves as the catalytic Proton donor. Residues His-349 and Asp-350 each coordinate substrate.

It belongs to the glycosyl hydrolase 13 family. TreS subfamily. In terms of assembly, homohexamer.

The catalysed reaction is D-maltose = alpha,alpha-trehalose. It catalyses the reaction Endohydrolysis of (1-&gt;4)-alpha-D-glucosidic linkages in polysaccharides containing three or more (1-&gt;4)-alpha-linked D-glucose units.. The protein operates within glycan biosynthesis; glycogen biosynthesis. It participates in capsule biogenesis; capsule polysaccharide biosynthesis. Functionally, catalyzes the reversible interconversion of maltose and trehalose by transglucosylation. Also displays amylase activity, catalyzing the endohydrolysis of (1-&gt;4)-alpha-D-glucosidic linkages in glycogen and maltooligosaccharides such as maltoheptaose, to produce maltose which then can be converted to trehalose. TreS plays a key role in the utilization of trehalose for the production of glycogen and alpha-glucan via the TreS-Pep2 branch involved in the biosynthesis of maltose-1-phosphate (M1P). Might also function as a sensor and/or regulator of trehalose levels within the cell. Thus, when trehalose levels in the cell become dangerously low, TreS could expedite the conversion of glycogen to maltose via its amylase activity and then convert the maltose to trehalose; but this enzyme also could expedite or promote the conversion of trehalose to glycogen when cytoplasmic trehalose levels become too high. The protein is Trehalose synthase/amylase TreS of Mycobacterium tuberculosis (strain CDC 1551 / Oshkosh).